The chain runs to 358 residues: MIGFAPISAPDALAEAAARARQDALTKPRGALGRLEDLSAWVASCQGQCPPRQFQRARVVVFAGDHGITRSGVSAYPPDATAQMVANIDGGGAAINALADVAGATVRVVDLAVDAEALSEQIGAHKVRRGSGDIATEDALTDDQTAAAIAAGQQIADAEVDAGADLLIAGDMGIGNTTPAAVLVAALTNTEPVAVVGFGTGVDDATWSRKTAAVRDALFRSARVLPDPVALLRCCGGADLAAMAGFCAQAAVRRTPLLLDGMAVTAAALVAERLAPGARQWWQAGHRSTEPGHQLALTALALDPVVDLRMRLGEGTGATVALPVLRAAVAALSSMATFAEAGVSTACDDAGATEPPES.

Residue E314 is the Proton acceptor of the active site.

This sequence belongs to the CobT family.

It carries out the reaction 5,6-dimethylbenzimidazole + nicotinate beta-D-ribonucleotide = alpha-ribazole 5'-phosphate + nicotinate + H(+). The protein operates within nucleoside biosynthesis; alpha-ribazole biosynthesis; alpha-ribazole from 5,6-dimethylbenzimidazole: step 1/2. Its function is as follows. Catalyzes the synthesis of alpha-ribazole-5'-phosphate from nicotinate mononucleotide (NAMN) and 5,6-dimethylbenzimidazole (DMB). This is Nicotinate-nucleotide--dimethylbenzimidazole phosphoribosyltransferase from Mycobacterium ulcerans (strain Agy99).